A 399-amino-acid polypeptide reads, in one-letter code: MAAPSPSGGGGSGGGSGSGTPGPVGSPAPGHPAVSSMQGKRKALKLNFANPPFKSTARFTLNPNPTGVQNPHIERLRTHSIESSGKLKISPEQHWDFTAEDLKDLGEIGRGAYGSVNKMVHKPSGQIMAVKRIRSTVDEKEQKQLLMDLDVVMRSSDCPYIVQFYGALFREGDCWICMELMSTSFDKFYKYVYSVLDDVIPEEILGKITLATVKALNHLKENLKIIHRDIKPSNILLDRSGNIKLCDFGISGQLVDSIAKTRDAGCRPYMAPERIDPSASRQGYDVRSDVWSLGITLYELATGRFPYPKWNSVFDQLTQVVKGDPPQLSNSEEREFSPSFINFVNLCLTKDESKRPKYKELLKHPFILMYEERAVEVACYVCKILDQMPATPSSPMYVD.

The interval 1–40 (MAAPSPSGGGGSGGGSGSGTPGPVGSPAPGHPAVSSMQGK) is disordered. Position 2 is an N-acetylalanine (Ala2). The segment covering 7–22 (SGGGGSGGGSGSGTPG) has biased composition (gly residues). A d domain region spans residues 37-52 (MQGKRKALKLNFANPP). Position 58 is an asymmetric dimethylarginine; alternate (Arg58). Position 58 is an omega-N-methylarginine; alternate (Arg58). Ser90 is subject to Phosphoserine. Residues 102 to 367 (LKDLGEIGRG…YKELLKHPFI (266 aa)) form the Protein kinase domain. Residues 108 to 116 (IGRGAYGSV) and Lys131 each bind ATP. Residue Asp229 is the Proton acceptor of the active site. Ser257 carries the phosphoserine; by MAP3K modification. At Thr261 the chain carries Phosphothreonine; by MAP3K. The interval 364–387 (HPFILMYEERAVEVACYVCKILDQ) is DVD domain.

Belongs to the protein kinase superfamily. STE Ser/Thr protein kinase family. MAP kinase kinase subfamily. In terms of assembly, interacts with SPAG9. Interacts (via its D domain) with its substrates MAPK8/JNK1, MAPK9/JNK2, MAPK10/JNK3, MAPK11 and MAPK14. Interacts (via its DVD domain) with MAP3Ks activators like MAP3K1/MEKK1 and MAP3K11/MLK3. Interacts with ARRB1, ARRB2 and MAPK8IP3/JIP3. In terms of processing, activated by phosphorylation on Ser-257 and Thr-261 by MAP kinase kinase kinases (MAP3Ks). As to expression, abundant expression is seen in the skeletal muscle. It is also widely expressed in other tissues.

Its subcellular location is the cytoplasm. It localises to the nucleus. It carries out the reaction L-seryl-[protein] + ATP = O-phospho-L-seryl-[protein] + ADP + H(+). The enzyme catalyses L-threonyl-[protein] + ATP = O-phospho-L-threonyl-[protein] + ADP + H(+). The catalysed reaction is L-tyrosyl-[protein] + ATP = O-phospho-L-tyrosyl-[protein] + ADP + H(+). Activated in response to a variety of cellular stresses, including UV and gamma-irradiation, heat shock, hyperosmolarity, T-cell receptor stimulation, peroxide and inflammatory cytokines. Also activated by developmental cues. MAP2K4/MKK4 is activated by the majority of MKKKs, such as MAP3K5/ASK1, MAP3K1/MEKK1, MAP3K7/TAK1, MAP3K10/MLK2, MAP3K11/MLK3, MAP3K12/DLK and MAP3K13/LZK. In terms of biological role, dual specificity protein kinase which acts as an essential component of the MAP kinase signal transduction pathway. Essential component of the stress-activated protein kinase/c-Jun N-terminal kinase (SAP/JNK) signaling pathway. With MAP2K7/MKK7, is the one of the only known kinase to directly activate the stress-activated protein kinase/c-Jun N-terminal kinases MAPK8/JNK1, MAPK9/JNK2 and MAPK10/JNK3. MAP2K4/MKK4 and MAP2K7/MKK7 both activate the JNKs by phosphorylation, but they differ in their preference for the phosphorylation site in the Thr-Pro-Tyr motif. MAP2K4 shows preference for phosphorylation of the Tyr residue and MAP2K7/MKK7 for the Thr residue. The phosphorylation of the Thr residue by MAP2K7/MKK7 seems to be the prerequisite for JNK activation at least in response to pro-inflammatory cytokines, while other stimuli activate both MAP2K4/MKK4 and MAP2K7/MKK7 which synergistically phosphorylate JNKs. MAP2K4 is required for maintaining peripheral lymphoid homeostasis. The MKK/JNK signaling pathway is also involved in mitochondrial death signaling pathway, including the release cytochrome c, leading to apoptosis. Whereas MAP2K7/MKK7 exclusively activates JNKs, MAP2K4/MKK4 additionally activates the p38 MAPKs MAPK11, MAPK12, MAPK13 and MAPK14. This is Dual specificity mitogen-activated protein kinase kinase 4 (MAP2K4) from Homo sapiens (Human).